The primary structure comprises 216 residues: Putative germin-like protein 2-1 (216 aa).

Positions 1–21 (MASTWFFLLALLAVSISNAFA) are cleaved as a signal peptide. A disulfide bridge links C31 with C46. The Cupin type-1 domain occupies 60-210 (SGLHMAGNTS…AFQVEKKIVD (151 aa)). Residue N67 is glycosylated (N-linked (GlcNAc...) asparagine). H108, H110, E115, and H156 together coordinate Mn(2+).

It belongs to the germin family. As to quaternary structure, oligomer (believed to be a pentamer but probably hexamer).

Its subcellular location is the secreted. The protein resides in the extracellular space. The protein localises to the apoplast. Its function is as follows. May play a role in plant defense. Probably has no oxalate oxidase activity even if the active site is conserved. The protein is Putative germin-like protein 2-1 of Oryza sativa subsp. japonica (Rice).